A 519-amino-acid polypeptide reads, in one-letter code: Zinc finger and BTB domain-containing protein 18.3 (519 aa).

In terms of domain architecture, BTB spans 24-91 (CDCTVLVGDA…MYEGKLQFKD (68 aa)). The tract at residues 189-227 (ASIPQTGGEVDTHTTAAGKTADSPCSSTGSLSHRSATSM) is disordered. Residues 201-227 (HTTAAGKTADSPCSSTGSLSHRSATSM) are compositionally biased toward polar residues. 4 C2H2-type zinc fingers span residues 367–389 (FMCPLCNKVFPSPHILQIHLSTH), 407–429 (PTCSLCGKTFSCMYTLKRHERTH), 435–457 (FTCTQCGKSFQYSHNLSRHAVVH), and 463–486 (HACKWCERRFTQSGDLYRHIRKFH).

The protein belongs to the krueppel C2H2-type zinc-finger protein family. ZBTB18 subfamily.

It localises to the nucleus. In terms of biological role, transcriptional repressor that plays a role in various developmental processes. Specifically binds the consensus DNA sequence 5'-[AC]ACATCTG[GT][AC]-3' which contains the E box core, and acts by recruiting chromatin remodeling multiprotein complexes. In Xenopus laevis (African clawed frog), this protein is Zinc finger and BTB domain-containing protein 18.3 (zbtb18.3).